The primary structure comprises 294 residues: Dof zinc finger protein DOF4.1 (294 aa).

The segment at 68–122 (RNCPRCNSSNTKFCYYNNYSLAQPRYLCKSCRRYWTEGGSLRNVPVGGGSRKNKK) adopts a Dof-type zinc-finger fold. The Zn(2+) site is built by Cys70, Cys73, Cys95, and Cys98. 2 disordered regions span residues 109–178 (RNVP…DKRA) and 247–294 (MYPY…GPTW). 2 stretches are compositionally biased toward polar residues: residues 126-136 (PNSSTSSSTKN) and 157-173 (KTHQNNNDLSLSFSSPM). A compositionally biased stretch (basic and acidic residues) spans 251–273 (GDHEDRQQHHHVRHDDGNKKREG). Residues 284 to 294 (ILGGDSGGPTW) are compositionally biased toward gly residues.

It localises to the nucleus. Transcription factor that binds specifically to a 5'-AA[AG]G-3' consensus core sequence. The sequence is that of Dof zinc finger protein DOF4.1 (DOF4.1) from Arabidopsis thaliana (Mouse-ear cress).